Here is a 375-residue protein sequence, read N- to C-terminus: Alcohol dehydrogenase 1A (375 aa).

An N-acetylserine modification is found at Ser-2. At Ser-23 the chain carries Phosphoserine. Cys-47 provides a ligand contact to Zn(2+). Position 48 to 52 (48 to 52) interacts with NAD(+); that stretch reads GTDDH. Zn(2+) contacts are provided by His-68, Cys-98, Cys-101, Cys-104, Cys-112, and Cys-175. Residues 200 to 205, Asp-224, Lys-229, Ile-270, 293 to 295, 318 to 320, and Arg-370 contribute to the NAD(+) site; these read GLGGVG, VGV, and AVL.

It belongs to the zinc-containing alcohol dehydrogenase family. In terms of assembly, dimer of identical or heterodimer of closely related subunits alpha, beta, or gamma that are encoded by genes ADH1A, ADH1B, and ADH1C, respectively. The cofactor is Zn(2+).

The protein localises to the cytoplasm. The enzyme catalyses a primary alcohol + NAD(+) = an aldehyde + NADH + H(+). It carries out the reaction a secondary alcohol + NAD(+) = a ketone + NADH + H(+). It catalyses the reaction butan-1-ol + NAD(+) = butanal + NADH + H(+). The catalysed reaction is 1-propanol + NAD(+) = propanal + NADH + H(+). Functionally, alcohol dehydrogenase. Oxidizes primary as well as secondary alcohols. Ethanol is a very poor substrate. The chain is Alcohol dehydrogenase 1A (ADH1A) from Pongo abelii (Sumatran orangutan).